We begin with the raw amino-acid sequence, 642 residues long: Uromodulin (642 aa).

The first 26 residues, 1-26 (MGQLSSLTSVWMVVVVTSWVIIAANI), serve as a signal peptide directing secretion. One can recognise an EGF-like 1 domain in the interval 32-64 (RSCSECHSNATCMEDGMVTTCSCLVGFTGSGFE). 21 cysteine pairs are disulfide-bonded: Cys-34-Cys-43, Cys-37-Cys-52, Cys-54-Cys-65, Cys-71-Cys-85, Cys-79-Cys-94, Cys-96-Cys-108, Cys-114-Cys-128, Cys-122-Cys-137, Cys-139-Cys-150, Cys-152-Cys-163, Cys-157-Cys-172, Cys-176-Cys-269, Cys-197-Cys-284, Cys-219-Cys-257, Cys-225-Cys-289, Cys-250-Cys-258, Cys-299-Cys-308, Cys-302-Cys-317, Cys-319-Cys-348, Cys-336-Cys-426, and Cys-367-Cys-390. Asn-40 carries N-linked (GlcNAc...) asparagine glycosylation. An EGF-like 2; calcium-binding domain is found at 67–109 (DLDECAIPGAHNCSEGSSCMNTLGSYLCTCPDGFRLTPGLGCI). Asn-78 carries an N-linked (GlcNAc...) asparagine glycan. Residues 110–151 (DVDECSEPGLSRCHALATCINNKGNYSCVCPAGYRGDGQHCE) enclose the EGF-like 3; calcium-binding domain. A glycan (N-linked (GlcNAc...) asparagine) is linked at Asn-134. The interval 152–173 (CSPGSCGPGLDCVPVGDALVCA) is beta hairpin. The tract at residues 174–293 (DPCQEHRILD…CYLAYCTDPT (120 aa)) is D10C. Residues Asn-234 and Asn-246 are each glycosylated (N-linked (GlcNAc...) asparagine). Residue Asn-277 is glycosylated (N-linked (GlcNAc...) asparagine). The EGF-like 4 domain occupies 294 to 325 (SVLGTCEECSVEEDCKSHDGMWSCQCKQDFNV). N-linked (GlcNAc...) asparagine glycosylation occurs at Asn-324. A ZP-N region spans residues 335–430 (ECRPNDIKVS…KINFECSYPL (96 aa)). The ZP domain occupies 335–590 (ECRPNDIKVS…PTCSGTRFRS (256 aa)). Asn-397 and Asn-448 each carry an N-linked (GlcNAc...) asparagine glycan. The tract at residues 431 to 454 (DMKVSLETSLQPIVSSLNISVGGT) is flexible ZP-N/ZP-C linker; important for secretion and polymerization into filaments. The tract at residues 455-465 (GMFTVRMALFQ) is internal hydrophobic patch (IHP). Residues 455–590 (GMFTVRMALF…PTCSGTRFRS (136 aa)) form a ZP-C region. 3 disulfides stabilise this stretch: Cys-507–Cys-567, Cys-528–Cys-583, and Cys-572–Cys-579. Asn-514 is a glycosylation site (N-linked (GlcNAc...) asparagine). The essential for cleavage by HPN stretch occupies residues 587 to 590 (RFRS). An external hydrophobic patch (EHP); regulates polymerization into filaments region spans residues 599–607 (VLNLGPITR). A lipid anchor (GPI-anchor amidated serine) is attached at Ser-620. Positions 621–642 (SLGFLKVCLPLLLSATLTLMFQ) are cleaved as a propeptide — removed in mature form.

Homodimer that then polymerizes into long filaments. The filaments can additionally assemble laterally to form a sheet. The filaments consist of a zigzag-shaped backbone with laterally protruding arms which interact with bacterial adhesin fimH. Two fimH molecules can bind to a single UMOD monomer. Post-translationally, N-glycosylated. Proteolytically cleaved at a conserved C-terminal proteolytic cleavage site to generate the secreted form found in urine. This cleavage is catalyzed by HPN. As to expression, detected in kidney and pancreas.

Its subcellular location is the apical cell membrane. The protein localises to the basolateral cell membrane. It is found in the cell projection. The protein resides in the cilium membrane. It localises to the secreted. Functions in biogenesis and organization of the apical membrane of epithelial cells of the thick ascending limb of Henle's loop (TALH), where it promotes formation of complex filamentous gel-like structure that may play a role in the water barrier permeability. May serve as a receptor for binding and endocytosis of cytokines (IL-1, IL-2) and TNF. Facilitates neutrophil migration across renal epithelia. Its function is as follows. In the urine, may contribute to colloid osmotic pressure, retards passage of positively charged electrolytes, and inhibits formation of liquid containing supersaturated salts and subsequent formation of salt crystals. Protects against urinary tract infections by binding to type 1 fimbriated E.coli. Binds to bacterial adhesin fimH which mediates the stable formation of bacterial aggregates, prevents the binding of E.coli to uroplakins UPK1A and UPK1B which act as urothelial receptors for type I fimbriae, and allows for pathogen clearance through micturation. Also promotes aggregation of other bacteria including K.pneumoniae, P.aeruginosa and S.mitis and so may also protect against other uropathogens. The sequence is that of Uromodulin (UMOD) from Canis lupus familiaris (Dog).